Consider the following 699-residue polypeptide: Ferric reduction oxidase 4 (699 aa).

Residues 1-9 (MGNMRSLVK) are Cytoplasmic-facing. The chain crosses the membrane as a helical span at residues 10–29 (TLMVVLFLGWILVWIMISTN). Topologically, residues 30 to 54 (LFKSKWTPKLSKYLNTTYFGPQGTN) are lumenal. A helical membrane pass occupies residues 55-73 (LVLLTVPMMFIAVLSCVYL). Residues 74 to 101 (HIQKKPTQPQREWKLKRIMGRVIMVMNP) are Cytoplasmic-facing. The helical transmembrane segment at 102 to 125 (LGIVTATELTFSLLFVALLAWSLY) threads the bilayer. Residues 126 to 190 (NYLYLSYHVH…VGLTSESSIK (65 aa)) are Lumenal-facing. The Ferric oxidoreductase domain maps to 157–275 (GYVGNICWAF…HHLYGLYIVF (119 aa)). The helical transmembrane segment at 191–214 (YHIWLGHVSNFCFLVHTVVFLIYW) threads the bilayer. Residues H192 and H206 each contribute to the heme site. The Cytoplasmic segment spans residues 215–264 (AMINKLMETFAWNPTYVPNLAGTIAMVIGIAMWVTSLPSFRRKKFEIFFY). The chain crosses the membrane as a helical span at residues 265-289 (THHLYGLYIVFYVIHVGDSWFCMIL). Heme-binding residues include H266 and H279. Over 290-311 (PNIFLFFIDRYLRFLQSTKRSR) the chain is Lumenal. The FAD-binding FR-type domain occupies 305 to 408 (QSTKRSRLVS…EGPYGPNSFD (104 aa)). Residues 312 to 332 (LVSARILPSDNLELTFSKTPG) form a helical membrane-spanning segment. The Cytoplasmic segment spans residues 333 to 525 (LHYTPTSILF…PISPVLGPNN (193 aa)). 354–357 (HPFT) contacts FAD. 400–403 (GPYG) contributes to the NAD(+) binding site. A helical transmembrane segment spans residues 526–548 (FLWLGVVILSSFVMFLLLIGIVT). Over 549–568 (RYYIYPVDHNTGSIYNFSYR) the chain is Lumenal. A helical membrane pass occupies residues 569–590 (GLWDMFLGSACIFISSSVVFLW). Residues 591-699 (RKKQNKEGDK…LHFEAISFNW (109 aa)) lie on the Cytoplasmic side of the membrane.

This sequence belongs to the ferric reductase (FRE) family. The cofactor is FAD. Expressed in siliques. Detected at low levels in roots, cotyledon veins and shoots.

It is found in the membrane. It carries out the reaction 2 a Fe(II)-siderophore + NAD(+) + H(+) = 2 a Fe(III)-siderophore + NADH. Its function is as follows. Ferric chelate reductase. May participate in the transport of electrons to a Fe(3+) ion via FAD and heme intermediates. May function as root surface cupric chelate reductase and participate in the reduction of Cu(2+), for Cu(+) acquisition via Cu(+) transporters in response to copper deficiency. In Arabidopsis thaliana (Mouse-ear cress), this protein is Ferric reduction oxidase 4 (FRO4).